The primary structure comprises 228 residues: Urease accessory protein UreG (228 aa).

Gly34 to Thr41 provides a ligand contact to GTP.

Belongs to the SIMIBI class G3E GTPase family. UreG subfamily. Homodimer. UreD, UreF and UreG form a complex that acts as a GTP-hydrolysis-dependent molecular chaperone, activating the urease apoprotein by helping to assemble the nickel containing metallocenter of UreC. The UreE protein probably delivers the nickel.

The protein resides in the cytoplasm. Its function is as follows. Facilitates the functional incorporation of the urease nickel metallocenter. This process requires GTP hydrolysis, probably effectuated by UreG. The protein is Urease accessory protein UreG of Rhodococcus opacus (strain B4).